The chain runs to 507 residues: ATP synthase subunit alpha, chloroplastic (507 aa).

An ATP-binding site is contributed by 170–177 (GDRQTGKT).

The protein belongs to the ATPase alpha/beta chains family. In terms of assembly, F-type ATPases have 2 components, CF(1) - the catalytic core - and CF(0) - the membrane proton channel. CF(1) has five subunits: alpha(3), beta(3), gamma(1), delta(1), epsilon(1). CF(0) has four main subunits: a, b, b' and c.

It localises to the plastid. The protein localises to the chloroplast thylakoid membrane. The catalysed reaction is ATP + H2O + 4 H(+)(in) = ADP + phosphate + 5 H(+)(out). Functionally, produces ATP from ADP in the presence of a proton gradient across the membrane. The alpha chain is a regulatory subunit. This is ATP synthase subunit alpha, chloroplastic from Solanum bulbocastanum (Wild potato).